We begin with the raw amino-acid sequence, 367 residues long: CCN family member 4 (367 aa).

The signal sequence occupies residues 1–22; the sequence is MRWFLPWTLAAVTAAAASTVLA. In terms of domain architecture, IGFBP N-terminal spans 45-118; that stretch reads RPQFCKWPCE…RYAIGVCAQV (74 aa). 4 disulfides stabilise this stretch: Cys49-Cys73, Cys53-Cys75, Cys55-Cys76, and Cys62-Cys79. Residue Asn86 is glycosylated (N-linked (GlcNAc...) asparagine). Cystine bridges form between Cys87–Cys101 and Cys93–Cys115. The region spanning 121-186 is the VWFC domain; that stretch reads VGCVLDGVRY…GHCCEQWVCE (66 aa). The N-linked (GlcNAc...) asparagine glycan is linked to Asn143. In terms of domain architecture, TSP type-1 spans 215–260; sequence NCIAYTSPWSPCSTSCGLGVSTRISNVNAQCWPEQESRLCNLRPCD. Disulfide bonds link Cys273–Cys310, Cys290–Cys324, Cys301–Cys340, Cys304–Cys342, and Cys309–Cys346. The CTCK domain occupies 273-347; sequence CLAVYQPEAS…NACFCNLSCR (75 aa). Asn284 carries an N-linked (GlcNAc...) asparagine glycan. Asn343 carries N-linked (GlcNAc...) asparagine glycosylation.

This sequence belongs to the CCN family. As to expression, expressed in heart, kidney, lung, pancreas, placenta, ovary, small intestine and spleen. Isoform 2 is expressed predominantly in scirrhous gastric carcinoma and, weakly in placenta. Overexpression is associated with several cancers including breast cancer and colon tumors. Isoform 2 is overexpressed in scirrhous gastric carcinoma.

The protein resides in the secreted. Functionally, downstream regulator in the Wnt/Frizzled-signaling pathway. Associated with cell survival. Attenuates p53-mediated apoptosis in response to DNA damage through activation of AKT kinase. Up-regulates the anti-apoptotic Bcl-X(L) protein. Adheres to skin and melanoma fibroblasts. In vitro binding to skin fibroblasts occurs through the proteoglycans, decorin and biglycan. This chain is CCN family member 4, found in Homo sapiens (Human).